Reading from the N-terminus, the 415-residue chain is Transposase for insertion sequence element IS1081 (415 aa).

Belongs to the transposase mutator family.

Its function is as follows. Required for the transposition of the insertion element. The protein is Transposase for insertion sequence element IS1081 of Mycobacterium bovis (strain ATCC BAA-935 / AF2122/97).